Consider the following 141-residue polypeptide: MEMLQGLLLLMLLSMGGTWASKEPLRPRCRPINATLAVEKEGCPVCITVNTTICAGYCPTMTRVLQSVLPPLPQVVCTYRDVRFESIWLPGCPRGVDPVVSYAVALSCHCGLCRRSTSDCGGPKDHPLTCDHPQLPGLLFL.

An N-terminal signal peptide occupies residues 1-20; it reads MEMLQGLLLLMLLSMGGTWA. Cystine bridges form between Cys-29–Cys-77, Cys-43–Cys-92, Cys-46–Cys-130, Cys-54–Cys-108, Cys-58–Cys-110, and Cys-113–Cys-120. Asn-33 and Asn-50 each carry an N-linked (GlcNAc...) asparagine glycan.

Belongs to the glycoprotein hormones subunit beta family. Heterodimer of a common alpha chain and a unique beta chain which confers biological specificity to thyrotropin, lutropin, follitropin and gonadotropin.

It is found in the secreted. In terms of biological role, promotes spermatogenesis and ovulation by stimulating the testes and ovaries to synthesize steroids. In Pongo pygmaeus (Bornean orangutan), this protein is Lutropin subunit beta (LHB).